A 177-amino-acid chain; its full sequence is Probable adenylyl-sulfate kinase (177 aa).

Residue 12–19 (GLSGAGKT) coordinates ATP. Ser-86 serves as the catalytic Phosphoserine intermediate.

The protein belongs to the APS kinase family.

The catalysed reaction is adenosine 5'-phosphosulfate + ATP = 3'-phosphoadenylyl sulfate + ADP + H(+). It participates in sulfur metabolism; hydrogen sulfide biosynthesis; sulfite from sulfate: step 2/3. Catalyzes the synthesis of activated sulfate. This is Probable adenylyl-sulfate kinase (cysC) from Synechocystis sp. (strain ATCC 27184 / PCC 6803 / Kazusa).